A 2194-amino-acid chain; its full sequence is Genome polyprotein (2194 aa).

Residues 1-20 are disordered; the sequence is MGAQVSRQQTGTHENANVAT. Residue G2 is the site of N-myristoyl glycine; by host attachment. The Cytoplasmic segment spans residues 2–1509; the sequence is GAQVSRQQTG…HISRAFIALQ (1508 aa). Residues 558 to 574 form an amphipathic alpha-helix region; that stretch reads LPEQAATTQIGEIVKTV. Active-site for protease 2A activity residues include H885 and D903. Zn(2+) is bound by residues C920 and C922. C974 acts as the For protease 2A activity in catalysis. Zn(2+) contacts are provided by C980 and H982. Residues 1114–1186 form a membrane-binding region; it reads SDSWLKKFTE…EHSCPNSEXQ (73 aa). The oligomerization stretch occupies residues 1114-1252; sequence SDSWLKKFTE…SPGTGKSVAS (139 aa). The segment at 1135-1139 is RNA-binding; the sequence is AQKID. In terms of domain architecture, SF3 helicase spans 1218 to 1374; it reads ERKINNYIQF…ESYKDGVRLD (157 aa). 1242–1249 provides a ligand contact to ATP; that stretch reads GSPGTGKS. Positions 1382, 1395, and 1400 each coordinate Zn(2+). Residues 1382–1400 form a C4-type; degenerate zinc finger; the sequence is CNPEKCRPTNYKKCCPLIC. The segment at 1427–1434 is RNA-binding; it reads EYRIRNST. Positions 1438-1443 are oligomerization; it reads LEALFQ. An intramembrane segment occupies 1510–1525; that stretch reads AITTFVSIAGVVYVIY. Residues 1526–2194 lie on the Cytoplasmic side of the membrane; it reads KLFAGIQGPY…SLRRKWLDSF (669 aa). Y1535 carries the O-(5'-phospho-RNA)-tyrosine modification. Residues 1555 to 1733 enclose the Peptidase C3 domain; sequence GPSLDFAQAI…FAAMLLQNYF (179 aa). Residues H1594, E1625, and C1701 each act as for protease 3C activity in the active site. Residues 1960–2075 form the RdRp catalytic domain; the sequence is GKIFAFDYTG…SYPHEIDPGL (116 aa). Mg(2+) contacts are provided by D1966 and D2061.

Belongs to the picornaviruses polyprotein family. As to quaternary structure, interacts with capsid protein VP1 and capsid protein VP3 to form heterotrimeric protomers. In terms of assembly, interacts with capsid protein VP0, and capsid protein VP3 to form heterotrimeric protomers. Five protomers subsequently associate to form pentamers which serve as building blocks for the capsid. Interacts with capsid protein VP2, capsid protein VP3 and capsid protein VP4 following cleavage of capsid protein VP0. Interacts with capsid protein VP1 and capsid protein VP3 in the mature capsid. As to quaternary structure, interacts with capsid protein VP0 and capsid protein VP1 to form heterotrimeric protomers. Five protomers subsequently associate to form pentamers which serve as building blocks for the capsid. Interacts with capsid protein VP4 in the mature capsid. Interacts with protein 2C; this interaction may be important for virion morphogenesis. In terms of assembly, interacts with capsid protein VP1 and capsid protein VP3. Homodimer. As to quaternary structure, homohexamer; forms a hexameric ring structure with 6-fold symmetry characteristic of AAA+ ATPases. Interacts (via N-terminus) with host RTN3 (via reticulon domain); this interaction is important for viral replication. Interacts with capsid protein VP3; this interaction may be important for virion morphogenesis. In terms of assembly, interacts with protein 3CD. Homodimer. Interacts with host GBF1. Interacts (via GOLD domain) with host ACBD3 (via GOLD domain); this interaction allows the formation of a viral protein 3A/ACBD3 heterotetramer with a 2:2 stoichiometry, which will stimulate the recruitment of host PI4KB in order to synthesize PI4P at the viral RNA replication sites. As to quaternary structure, interacts with RNA-directed RNA polymerase. In terms of assembly, interacts with protein 3AB and with RNA-directed RNA polymerase. Interacts with Viral protein genome-linked and with protein 3CD. Mg(2+) serves as cofactor. Post-translationally, specific enzymatic cleavages in vivo by the viral proteases yield processing intermediates and the mature proteins. In terms of processing, myristoylation is required for the formation of pentamers during virus assembly. Further assembly of 12 pentamers and a molecule of genomic RNA generates the provirion. During virion maturation, immature virions are rendered infectious following cleavage of VP0 into VP4 and VP2. This maturation seems to be an autocatalytic event triggered by the presence of RNA in the capsid and it is followed by a conformational change infectious virion. Post-translationally, myristoylation is required during RNA encapsidation and formation of the mature virus particle. In terms of processing, VPg is uridylylated by the polymerase into VPg-pUpU. This acts as a nucleotide-peptide primer for the genomic RNA replication.

It is found in the virion. It localises to the host cytoplasm. The protein localises to the host cytoplasmic vesicle membrane. Its subcellular location is the host nucleus. The catalysed reaction is a ribonucleoside 5'-triphosphate + H2O = a ribonucleoside 5'-diphosphate + phosphate + H(+). The enzyme catalyses Selective cleavage of Tyr-|-Gly bond in the picornavirus polyprotein.. It carries out the reaction RNA(n) + a ribonucleoside 5'-triphosphate = RNA(n+1) + diphosphate. It catalyses the reaction Selective cleavage of Gln-|-Gly bond in the poliovirus polyprotein. In other picornavirus reactions Glu may be substituted for Gln, and Ser or Thr for Gly.. With respect to regulation, replication or transcription is subject to high level of random mutations by the nucleotide analog ribavirin. Forms an icosahedral capsid of pseudo T=3 symmetry with capsid proteins VP2 and VP3. The capsid is 300 Angstroms in diameter, composed of 60 copies of each capsid protein and enclosing the viral positive strand RNA genome. Capsid protein VP1 mainly forms the vertices of the capsid. Capsid protein VP1 interacts with host cell receptor to provide virion attachment to target host cells. This attachment induces virion internalization. Tyrosine kinases are probably involved in the entry process. After binding to its receptor, the capsid undergoes conformational changes. Capsid protein VP1 N-terminus (that contains an amphipathic alpha-helix) and capsid protein VP4 are externalized. Together, they shape a pore in the host membrane through which viral genome is translocated to host cell cytoplasm. Functionally, forms an icosahedral capsid of pseudo T=3 symmetry with capsid proteins VP2 and VP3. The capsid is 300 Angstroms in diameter, composed of 60 copies of each capsid protein and enclosing the viral positive strand RNA genome. Its function is as follows. Lies on the inner surface of the capsid shell. After binding to the host receptor, the capsid undergoes conformational changes. Capsid protein VP4 is released, Capsid protein VP1 N-terminus is externalized, and together, they shape a pore in the host membrane through which the viral genome is translocated into the host cell cytoplasm. In terms of biological role, component of immature procapsids, which is cleaved into capsid proteins VP4 and VP2 after maturation. Allows the capsid to remain inactive before the maturation step. Cysteine protease that cleaves viral polyprotein and specific host proteins. It is responsible for the autocatalytic cleavage between the P1 and P2 regions, which is the first cleavage occurring in the polyprotein. Also cleaves the host translation initiation factor EIF4G1, in order to shut down the capped cellular mRNA translation. Inhibits the host nucleus-cytoplasm protein and RNA trafficking by cleaving host members of the nuclear pores. Counteracts stress granule formation probably by antagonizing its assembly or promoting its dissassembly. Functionally, plays an essential role in the virus replication cycle by acting as a viroporin. Creates a pore in the host endoplasmic reticulum and as a consequence releases Ca2+ in the cytoplasm of infected cell. In turn, high levels of cytoplasmic calcium may trigger membrane trafficking and transport of viral ER-associated proteins to viroplasms, sites of viral genome replication. Its function is as follows. Induces and associates with structural rearrangements of intracellular membranes. Displays RNA-binding, nucleotide binding and NTPase activities. May play a role in virion morphogenesis and viral RNA encapsidation by interacting with the capsid protein VP3. In terms of biological role, localizes the viral replication complex to the surface of membranous vesicles. Together with protein 3CD binds the Cis-Active RNA Element (CRE) which is involved in RNA synthesis initiation. Acts as a cofactor to stimulate the activity of 3D polymerase, maybe through a nucleid acid chaperone activity. Localizes the viral replication complex to the surface of membranous vesicles. It inhibits host cell endoplasmic reticulum-to-Golgi apparatus transport and causes the disassembly of the Golgi complex, possibly through GBF1 interaction. This would result in depletion of MHC, trail receptors and IFN receptors at the host cell surface. Plays an essential role in viral RNA replication by recruiting ACBD3 and PI4KB at the viral replication sites, thereby allowing the formation of the rearranged membranous structures where viral replication takes place. Functionally, acts as a primer for viral RNA replication and remains covalently bound to viral genomic RNA. VPg is uridylylated prior to priming replication into VPg-pUpU. The oriI viral genomic sequence may act as a template for this. The VPg-pUpU is then used as primer on the genomic RNA poly(A) by the RNA-dependent RNA polymerase to replicate the viral genome. During genome replication, the VPg-RNA linkage is removed by the host TDP2, thereby accelerating replication. During the late stage of the replication cycle, host TDP2 is excluded from sites of viral RNA synthesis and encapsidation, allowing for the generation of progeny virions. Its function is as follows. Involved in the viral replication complex and viral polypeptide maturation. It exhibits protease activity with a specificity and catalytic efficiency that is different from protease 3C. Protein 3CD lacks polymerase activity. The 3C domain in the context of protein 3CD may have an RNA binding activity. Protein 3CD binds to the 5'UTR of the viral genome. In terms of biological role, replicates the viral genomic RNA on the surface of intracellular membranes. May form linear arrays of subunits that propagate along a strong head-to-tail interaction called interface-I. Covalently attaches UMP to a tyrosine of VPg, which is used to prime RNA synthesis. The positive stranded RNA genome is first replicated at virus induced membranous vesicles, creating a dsRNA genomic replication form. This dsRNA is then used as template to synthesize positive stranded RNA genomes. ss(+)RNA genomes are either translated, replicated or encapsidated. Major viral protease that mediates proteolytic processing of the polyprotein. Cleaves host EIF5B, contributing to host translation shutoff. Also cleaves host PABPC1, contributing to host translation shutoff. Cleaves host NLRP1, triggers host N-glycine-mediated degradation of the autoinhibitory NLRP1 N-terminal fragment. The protein is Genome polyprotein of Homo sapiens (Human).